The chain runs to 402 residues: Cholinephosphotransferase 1 (402 aa).

At 1-62 the chain is on the cytoplasmic side; that stretch reads MGLAEGLAAR…LVEKVPLWLA (62 aa). The helical transmembrane segment at 63–83 threads the bilayer; the sequence is PNTITMVGLLLNVLSTLILVC. Position 64 (Asn-64) interacts with CDP-choline. At 84-93 the chain is on the lumenal side; that stretch reads YCPTATEGAP. A helical membrane pass occupies residues 94-118; the sequence is FWTYLLCAIGLFVYQSLDAIDGKQA. The Mg(2+) site is built by Asp-111 and Asp-114. Arg-119 lines the CDP-choline pocket. Topologically, residues 119–125 are cytoplasmic; it reads RRTNSSS. Residues 126–150 traverse the membrane as a helical segment; sequence PLGEMFDHGCDSISIVFVNLGTIAA. Asp-132 is a Mg(2+) binding site. His-133 acts as the Proton acceptor in catalysis. Asp-136 is a binding site for Mg(2+). Topologically, residues 151-160 are lumenal; sequence VRLGTLPGWM. Residues 161-179 traverse the membrane as a helical segment; the sequence is FYCCFVGMFMFYCAQWQTY. Residues 180 to 190 are Cytoplasmic-facing; it reads VCGTLKFGIID. Residues 191 to 207 form a helical membrane-spanning segment; the sequence is VTELQISVTVMFLMTAV. Over 208 to 222 the chain is Lumenal; that stretch reads CGPELWDYEIPFTGL. A helical transmembrane segment spans residues 223–248; it reads PMKTIPLLGIIGGTVYSCSNYFRVIL. At 249–265 the chain is on the cytoplasmic side; the sequence is SGGVGKNGSTVAGTSVL. Residues 266 to 281 traverse the membrane as a helical segment; it reads SPGLHIGLVLLLALMI. Topologically, residues 282–293 are lumenal; that stretch reads YKKSTTNLFLQN. A helical membrane pass occupies residues 294–316; it reads PCLYTLAFGFVSAKITIKLVIAH. Residues 317 to 329 are Cytoplasmic-facing; it reads MTKSEISLQDTAF. Residues 330–339 traverse the membrane as a helical segment; it reads IGPGLLFFNQ. At 340-346 the chain is on the lumenal side; the sequence is YFNSFID. A helical transmembrane segment spans residues 347-376; the sequence is EYIVLWIAMVISFADLLRYCISVCLQIATH. Residues 377–402 lie on the Cytoplasmic side of the membrane; it reads LRISVFRISSNQAAEQVQTQKQKLTD.

The protein belongs to the CDP-alcohol phosphatidyltransferase class-I family. Homodimer. The cofactor is Mg(2+). It depends on Mn(2+) as a cofactor.

It is found in the golgi apparatus membrane. It catalyses the reaction CDP-choline + a 1,2-diacyl-sn-glycerol = a 1,2-diacyl-sn-glycero-3-phosphocholine + CMP + H(+). The catalysed reaction is 1,2-dioctanoyl-sn-glycerol + CDP-choline = 1,2-dioctanoyl-sn-glycero-3-phosphocholine + CMP + H(+). The enzyme catalyses 1-octadecanoyl-2-(5Z,8Z,11Z,14Z-eicosatetraenoyl)-sn-glycerol + CDP-choline = 1-octadecanoyl-2-(5Z,8Z,11Z,14Z-eicosatetraenoyl)-sn-glycero-3-phosphocholine + CMP + H(+). It carries out the reaction 1-hexadecanoyl-2-(9Z-octadecenoyl)-sn-glycerol + CDP-choline = 1-hexadecanoyl-2-(9Z-octadecenoyl)-sn-glycero-3-phosphocholine + CMP + H(+). It catalyses the reaction 1-hexadecanoyl-2-(4Z,7Z,10Z,13Z,16Z,19Z-docosahexaenoyl)-sn-glycerol + CDP-choline = 1-hexadecanoyl-2-(4Z,7Z,10Z,13Z,16Z,19Z-docosahexaenoyl)-sn-glycero-3-phosphocholine + CMP + H(+). Its pathway is phospholipid metabolism; phosphatidylcholine biosynthesis; phosphatidylcholine from phosphocholine: step 2/2. Functionally, catalyzes the final step of de novo phosphatidylcholine (PC) synthesis, i.e. the transfer of choline phosphate from CDP-choline to the free hydroxyl of a diacylglycerol (DAG), producing a PC. It thereby plays a central role in the formation and maintenance of vesicular membranes. Shows a high preference for CDP-choline over CDP-ethanolamine as substrate. This is Cholinephosphotransferase 1 (chpt1) from Xenopus laevis (African clawed frog).